The sequence spans 66 residues: DNA-directed RNA polymerase subunit Rpo10 (66 aa).

4 residues coordinate Zn(2+): Cys-7, Cys-10, Cys-47, and Cys-48.

The protein belongs to the archaeal Rpo10/eukaryotic RPB10 RNA polymerase subunit family. As to quaternary structure, part of the RNA polymerase complex. Zn(2+) serves as cofactor.

It localises to the cytoplasm. The enzyme catalyses RNA(n) + a ribonucleoside 5'-triphosphate = RNA(n+1) + diphosphate. Its function is as follows. DNA-dependent RNA polymerase (RNAP) catalyzes the transcription of DNA into RNA using the four ribonucleoside triphosphates as substrates. The protein is DNA-directed RNA polymerase subunit Rpo10 of Haloarcula marismortui (strain ATCC 43049 / DSM 3752 / JCM 8966 / VKM B-1809) (Halobacterium marismortui).